Reading from the N-terminus, the 1250-residue chain is DNA-directed RNA polymerase subunit beta (1250 aa).

The segment at glutamine 1215–leucine 1250 is disordered.

Belongs to the RNA polymerase beta chain family. The RNAP catalytic core consists of 2 alpha, 1 beta, 1 beta' and 1 omega subunit. When a sigma factor is associated with the core the holoenzyme is formed, which can initiate transcription.

The enzyme catalyses RNA(n) + a ribonucleoside 5'-triphosphate = RNA(n+1) + diphosphate. In terms of biological role, DNA-dependent RNA polymerase catalyzes the transcription of DNA into RNA using the four ribonucleoside triphosphates as substrates. This is DNA-directed RNA polymerase subunit beta from Acetivibrio thermocellus (strain ATCC 27405 / DSM 1237 / JCM 9322 / NBRC 103400 / NCIMB 10682 / NRRL B-4536 / VPI 7372) (Clostridium thermocellum).